A 474-amino-acid polypeptide reads, in one-letter code: PTS system N-acetylmuramic acid-specific EIIBC component (474 aa).

Residues 1 to 89 (MAKEISSELL…SELLGEAPVQ (89 aa)) form the PTS EIIB type-1 domain. The Cytoplasmic segment spans residues 1–123 (MAKEISSELL…LAKFATIFTP (123 aa)). Cys29 functions as the Phosphocysteine intermediate; for EIIB activity in the catalytic mechanism. Positions 115–474 (AKFATIFTPL…LFGCRNVNLD (360 aa)) constitute a PTS EIIC type-1 domain. The helical transmembrane segment at 124-144 (LIPGFIAAGLLLGIATLIATV) threads the bilayer. At 145–157 (MHVPADAQGTLPD) the chain is on the periplasmic side. A helical transmembrane segment spans residues 158-178 (ALNFMKVFSKGLFTFLVILVG). Over 179-180 (YN) the chain is Cytoplasmic. The helical transmembrane segment at 181–201 (AAQAFGGTGVNGAIIAALFLL) threads the bilayer. The Periplasmic segment spans residues 202–217 (GYNPAATTGYYAGFHD). Residues 218–238 (FFGLPIDPRGNIIGVLIAAWA) traverse the membrane as a helical segment. At 239–260 (CARIEGMVRRFMPDDLDMLLTS) the chain is on the cytoplasmic side. Residues 261-281 (LITLLITATLAYLIIMPLGGW) traverse the membrane as a helical segment. Topologically, residues 282-301 (LFEGMSWLFMHLNSNPLGCA) are periplasmic. A helical membrane pass occupies residues 302-322 (VLAGLFLIAVVFGVHQGFIPV). The Cytoplasmic portion of the chain corresponds to 323–334 (YLALMDSQGFNS). The helical transmembrane segment at 335-355 (LFPILSMAGAGQVGAALALYW) threads the bilayer. Topologically, residues 356–368 (RAQPHSGLRSQVR) are periplasmic. A helical transmembrane segment spans residues 369–389 (GAIIPGLLGVGEPLIYGVTLP). Topologically, residues 390-393 (RMKP) are cytoplasmic. A helical membrane pass occupies residues 394–414 (FITACLGGAAGGLFIGLIAWW). Topologically, residues 415-440 (GLPMGLNSAFGPSGLVALPLMTSAQG) are periplasmic. The chain crosses the membrane as a helical span at residues 441–461 (ILPAMAIYAGGILVAWVCGFI). The Cytoplasmic segment spans residues 462-474 (FTTLFGCRNVNLD).

The protein resides in the cell inner membrane. It catalyses the reaction N-acetyl-beta-D-muramate(out) + N(pros)-phospho-L-histidyl-[protein] = N-acetyl-beta-D-muramate 6-phosphate(in) + L-histidyl-[protein]. Functionally, the phosphoenolpyruvate-dependent sugar phosphotransferase system (sugar PTS), a major carbohydrate active transport system, catalyzes the phosphorylation of incoming sugar substrates concomitantly with their translocation across the cell membrane. This system is involved in N-acetylmuramic acid (MurNAc) transport, yielding cytoplasmic MurNAc-6-P. Is also able to take up anhydro-N-acetylmuramic acid (anhMurNAc), but cannot phosphorylate the carbon 6, probably because of the 1,6-anhydro ring. In Shigella dysenteriae serotype 1 (strain Sd197), this protein is PTS system N-acetylmuramic acid-specific EIIBC component (murP).